Consider the following 635-residue polypeptide: Probable potassium transport system protein Kup (635 aa).

Transmembrane regions (helical) follow at residues 20–40, 62–82, 111–131, 149–169, 180–200, 223–243, 259–279, 292–312, 349–369, 377–397, 408–428, and 429–449; these read MALVIGAIGVVFGDIGTSPLY, VLSLAFWALMITVTLKYVTII, AYVVGILGIFGASLFFGDGVI, PSLHPFIVPITVVVLLVVFMV, VFGPITCLWFLSLGAIGIWNI, GWHGVFILGAVVLAVTGGEAL, WYFFVLPMLLLNYLGQGALVL, AVPSWALYPMIILATLAAVIA, IYVPGINWLLMVMVIALVLIF, VAYGISVSMTMLIDTLLLALV, WVLPLCVVFFIIELAFVIANG, and AKLLQGAWFPLALGIVVFTLM.

Belongs to the HAK/KUP transporter (TC 2.A.72) family.

Its subcellular location is the cell inner membrane. It carries out the reaction K(+)(in) + H(+)(in) = K(+)(out) + H(+)(out). Functionally, transport of potassium into the cell. Likely operates as a K(+):H(+) symporter. The chain is Probable potassium transport system protein Kup from Xanthomonas campestris pv. campestris (strain 8004).